Consider the following 162-residue polypeptide: Protein snakeskin (162 aa).

The Cytoplasmic segment spans residues 2–6 (VSVET). A helical membrane pass occupies residues 7–27 (VGSIFIKALKLIINLVIIFLY). The Extracellular portion of the chain corresponds to 28 to 53 (RWGDGGEFLGIGGTWNLNEEKSADAE). Residues 54–74 (IVASGVMVGFLIYTGCHTIAF) traverse the membrane as a helical segment. Topologically, residues 75–88 (AFGTTKHKGELCDT) are cytoplasmic. The helical transmembrane segment at 89 to 109 (IMNVVGCIMWIAVGGVALHYW) threads the bilayer. The Extracellular portion of the chain corresponds to 110-128 (KGYMSDEGFLYVNSERQVG). A helical membrane pass occupies residues 129–149 (IAMGSLCVIEGALYLLDTVLA). Residues 150 to 162 (CIHYSKGDTDYTQ) lie on the Cytoplasmic side of the membrane.

In terms of assembly, forms a complex with Tsp2A and mesh. Interacts with mesh; the interaction may be necessary for the localization of both proteins to the cell apicolateral region.

The protein localises to the apicolateral cell membrane. It is found in the cell junction. Its subcellular location is the septate junction. Functionally, required for assembly of smooth septate junctions (sSJs), together with mesh and Tsp2A. May be important for barrier function of the midgut epithelium. This Drosophila melanogaster (Fruit fly) protein is Protein snakeskin.